Reading from the N-terminus, the 195-residue chain is Imidazoleglycerol-phosphate dehydratase (195 aa).

The protein belongs to the imidazoleglycerol-phosphate dehydratase family.

It localises to the cytoplasm. The catalysed reaction is D-erythro-1-(imidazol-4-yl)glycerol 3-phosphate = 3-(imidazol-4-yl)-2-oxopropyl phosphate + H2O. It functions in the pathway amino-acid biosynthesis; L-histidine biosynthesis; L-histidine from 5-phospho-alpha-D-ribose 1-diphosphate: step 6/9. This chain is Imidazoleglycerol-phosphate dehydratase, found in Azoarcus sp. (strain BH72).